The sequence spans 345 residues: Anthranilate phosphoribosyltransferase (345 aa).

Residues glycine 79, 82-83 (GD), threonine 87, 89-92 (NVST), 106-114 (KHGNRAVSG), and serine 118 each bind 5-phospho-alpha-D-ribose 1-diphosphate. Glycine 79 lines the anthranilate pocket. Serine 91 is a Mg(2+) binding site. Asparagine 109 contributes to the anthranilate binding site. An anthranilate-binding site is contributed by arginine 164. Mg(2+)-binding residues include aspartate 223 and glutamate 224.

The protein belongs to the anthranilate phosphoribosyltransferase family. Homodimer. Requires Mg(2+) as cofactor.

It catalyses the reaction N-(5-phospho-beta-D-ribosyl)anthranilate + diphosphate = 5-phospho-alpha-D-ribose 1-diphosphate + anthranilate. The protein operates within amino-acid biosynthesis; L-tryptophan biosynthesis; L-tryptophan from chorismate: step 2/5. In terms of biological role, catalyzes the transfer of the phosphoribosyl group of 5-phosphorylribose-1-pyrophosphate (PRPP) to anthranilate to yield N-(5'-phosphoribosyl)-anthranilate (PRA). This is Anthranilate phosphoribosyltransferase from Saccharolobus islandicus (strain M.14.25 / Kamchatka #1) (Sulfolobus islandicus).